A 65-amino-acid polypeptide reads, in one-letter code: Large ribosomal subunit protein bL28 (65 aa).

The tract at residues 1-26 (MARRDALTGKSALSGQSRSHALNATK) is disordered. Over residues 11 to 22 (SALSGQSRSHAL) the composition is skewed to polar residues.

It belongs to the bacterial ribosomal protein bL28 family.

This is Large ribosomal subunit protein bL28 from Mycoplasma mycoides subsp. mycoides SC (strain CCUG 32753 / NCTC 10114 / PG1).